The following is a 149-amino-acid chain: MNKGHRHIIIRELITSNEIDTQEDLVELLLERDVKVTQATVSRDIKELHLVKVPTQTGGYKYSLPADNSFNPHQKLKRALIDCFICIDTVQFMIILKVMPGNGNSVGALIDNLDWPEKAGTLCGDDTCLIICRSEENAKTLTDRFIDML.

This sequence belongs to the ArgR family.

The protein resides in the cytoplasm. It functions in the pathway amino-acid biosynthesis; L-arginine biosynthesis [regulation]. Its function is as follows. Regulates arginine biosynthesis genes. This chain is Arginine repressor, found in Listeria innocua serovar 6a (strain ATCC BAA-680 / CLIP 11262).